Here is a 568-residue protein sequence, read N- to C-terminus: Transport inhibitor response 1-like protein Os11g0515500 (568 aa).

Residues 1–45 form the F-box domain; it reads MVFFPEEVVEHILGFLASHRDRNAVSLVCREWYRVERLSRRSVLV. Residues Lys-69, 103–104, and Arg-335 contribute to the 1D-myo-inositol hexakisphosphate site; that span reads KR. Residues 338–343 form an interaction with auxin-responsive proteins region; it reads PANANA. 390 to 392 is a 1D-myo-inositol hexakisphosphate binding site; that stretch reads SFR. Residues 394–398 form an interaction with auxin-responsive proteins region; the sequence is CVLDP. Position 425 (Arg-425) interacts with 1D-myo-inositol hexakisphosphate. Residues 453–454 form an interaction with auxin-responsive proteins region; the sequence is AF. 1D-myo-inositol hexakisphosphate contacts are provided by residues 473-474 and Arg-498; that span reads KK.

In terms of assembly, part of a SCF (SKP1-cullin-F-box) protein ligase complex. May interact with auxin and auxin-responsive proteins.

The protein localises to the nucleus. It functions in the pathway protein modification; protein ubiquitination. This chain is Transport inhibitor response 1-like protein Os11g0515500, found in Oryza sativa subsp. japonica (Rice).